We begin with the raw amino-acid sequence, 1112 residues long: Glutamate receptor-interacting protein 1 (1112 aa).

At Ser-43 the chain carries Phosphoserine. PDZ domains lie at 53 to 136 (VVEL…EYEL), 150 to 238 (TVEV…EYDV), 252 to 336 (LVEV…LPHH), 471 to 560 (EVVL…EFDV), 572 to 657 (HVKL…RKDE), and 672 to 754 (TVEL…KKQT). Disordered regions lie at residues 752-796 (KQTD…VYPS), 841-886 (KRAS…AEQE), and 922-963 (NHEA…DVGR). A compositionally biased stretch (low complexity) spans 869–880 (STASGFAGASDS). Residues 928-958 (ARSQLGRQASFQERSNSRPHYSQTTRSNTLP) are compositionally biased toward polar residues. The region spanning 988–1070 (KVTLYKDSGM…KLDLVISRNP (83 aa)) is the PDZ 7 domain. The segment at 1077 to 1112 (IEQPALPSDWSEQNSAFFQQPSHGGNLETREPTNTL) is disordered. Residues 1086 to 1099 (WSEQNSAFFQQPSH) are compositionally biased toward polar residues.

In terms of assembly, interacts with EFNB1, EPHA7, EPHB2, EFNB3, KIF5A, KIF5C, KIF5B and the C-terminal tail of PRLHR. Forms a ternary complex with GRIA2 and CSPG4. Can form homomultimers or heteromultimers with GRIP2. Interacts with GRIA2, GRIA3, GRIPAP1/GRASP1, PPFIA1, PPFIA4, FRAS1, PLCD4, PTPRF and liprins-alpha. Interacts with ATAD1 in an ATP-dependent manner. ATAD1-catalyzed ATP hydrolysis disrupts binding to ATAD1 and to GRIA2 and leads to AMPAR complex disassembly. Interacts with SLC30A9. Interacts with BUD23. Forms a complex with NSG1, GRIA2 and STX12; controls the intracellular fate of AMPAR and the endosomal sorting of the GRIA2 subunit toward recycling and membrane targeting. Interacts with NSG1. As to expression, expressed in brain, testis and retina. In brain highly expressed in the olfactory bulb, cortex and hippocampus and lower level in thalamus, cerebellum and spinal cord. In brain it is found in the perikaryon, dendrites, dendritic shafts, dendritic spines and, excitatory and inhibitory synapses of neurons. In retina, it is most abundant in the plexiform layers than in perikarya.

Its subcellular location is the cytoplasmic vesicle. It localises to the perikaryon. The protein localises to the cell projection. It is found in the dendrite. The protein resides in the cytoplasm. Its subcellular location is the endomembrane system. It localises to the postsynaptic cell membrane. The protein localises to the postsynaptic density. It is found in the endoplasmic reticulum membrane. May play a role as a localized scaffold for the assembly of a multiprotein signaling complex and as mediator of the trafficking of its binding partners at specific subcellular location in neurons. Through complex formation with NSG1, GRIA2 and STX12 controls the intracellular fate of AMPAR and the endosomal sorting of the GRIA2 subunit toward recycling and membrane targeting. This Rattus norvegicus (Rat) protein is Glutamate receptor-interacting protein 1 (Grip1).